A 132-amino-acid polypeptide reads, in one-letter code: S-protein homolog 15 (132 aa).

The N-terminal stretch at 1 to 20 (MSRLIFFILVTAIYFVGNEA) is a signal peptide.

Belongs to the plant self-incompatibility (S1) protein family.

The protein resides in the secreted. The protein is S-protein homolog 15 of Arabidopsis thaliana (Mouse-ear cress).